The following is a 266-amino-acid chain: Orotidine 5'-phosphate decarboxylase (266 aa).

Residues D38, 60 to 62 (KTH), 92 to 101 (DRKFADIGNT), Y218, and R236 contribute to the substrate site. K94 functions as the Proton donor in the catalytic mechanism.

The protein belongs to the OMP decarboxylase family.

It catalyses the reaction orotidine 5'-phosphate + H(+) = UMP + CO2. It functions in the pathway pyrimidine metabolism; UMP biosynthesis via de novo pathway; UMP from orotate: step 2/2. The sequence is that of Orotidine 5'-phosphate decarboxylase (URA3) from Candida maltosa (Yeast).